A 300-amino-acid polypeptide reads, in one-letter code: ETS homologous factor (300 aa).

A PNT domain is found at 29–115 (STCNVSSGFF…SNLQHLKWNG (87 aa)). The interval 179 to 204 (LPIAESPDTKKEQDHPTKPHTKKHNP) is disordered. Basic and acidic residues predominate over residues 185–195 (PDTKKEQDHPT). Residues 207–289 (THLWEFIRDI…DGRRLVYKFG (83 aa)) constitute a DNA-binding region (ETS).

It belongs to the ETS family.

Its subcellular location is the nucleus. Functionally, transcriptional activator that may play a role in regulating epithelial cell differentiation and proliferation. May act as a repressor for a specific subset of ETS/AP-1-responsive genes, and as a modulator of the nuclear response to mitogen-activated protein kinase signaling cascades. Binds to DNA sequences containing the consensus nucleotide core sequence GGAA. Involved in regulation of TNFRSF10B/DR5 expression through Ets-binding sequences on the TNFRSF10B/DR5 promoter. The polypeptide is ETS homologous factor (EHF) (Bos taurus (Bovine)).